A 443-amino-acid chain; its full sequence is ATP-dependent protease ATPase subunit HslU (443 aa).

ATP is bound by residues I18, 60 to 65, D256, E321, and R393; that span reads GVGKTE.

This sequence belongs to the ClpX chaperone family. HslU subfamily. In terms of assembly, a double ring-shaped homohexamer of HslV is capped on each side by a ring-shaped HslU homohexamer. The assembly of the HslU/HslV complex is dependent on binding of ATP.

It is found in the cytoplasm. In terms of biological role, ATPase subunit of a proteasome-like degradation complex; this subunit has chaperone activity. The binding of ATP and its subsequent hydrolysis by HslU are essential for unfolding of protein substrates subsequently hydrolyzed by HslV. HslU recognizes the N-terminal part of its protein substrates and unfolds these before they are guided to HslV for hydrolysis. In Enterobacter sp. (strain 638), this protein is ATP-dependent protease ATPase subunit HslU.